A 654-amino-acid chain; its full sequence is Tetracycline resistance protein TetQ (654 aa).

The region spanning methionine 1–glutamate 244 is the tr-type G domain. GTP-binding positions include alanine 10–threonine 17, aspartate 74–histidine 78, and asparagine 128–aspartate 131.

Belongs to the TRAFAC class translation factor GTPase superfamily. Classic translation factor GTPase family. TetM/TetO subfamily.

In terms of biological role, abolishes the inhibitory effect of tetracyclin on protein synthesis by a non-covalent modification of the ribosomes. This is Tetracycline resistance protein TetQ (tetQ) from Prevotella intermedia.